A 282-amino-acid chain; its full sequence is Biotin synthase (282 aa).

The 228-residue stretch at 1-228 (MQEIFLCSIS…NARLMVAGGR (228 aa)) folds into the Radical SAM core domain. [4Fe-4S] cluster-binding residues include Cys17, Cys21, and Cys24. Cys61, Cys96, Cys154, and Arg221 together coordinate [2Fe-2S] cluster.

Belongs to the radical SAM superfamily. Biotin synthase family. In terms of assembly, homodimer. [4Fe-4S] cluster is required as a cofactor. Requires [2Fe-2S] cluster as cofactor.

The catalysed reaction is (4R,5S)-dethiobiotin + (sulfur carrier)-SH + 2 reduced [2Fe-2S]-[ferredoxin] + 2 S-adenosyl-L-methionine = (sulfur carrier)-H + biotin + 2 5'-deoxyadenosine + 2 L-methionine + 2 oxidized [2Fe-2S]-[ferredoxin]. Its pathway is cofactor biosynthesis; biotin biosynthesis; biotin from 7,8-diaminononanoate: step 2/2. Catalyzes the conversion of dethiobiotin (DTB) to biotin by the insertion of a sulfur atom into dethiobiotin via a radical-based mechanism. The sequence is that of Biotin synthase from Helicobacter pylori (strain HPAG1).